Here is a 155-residue protein sequence, read N- to C-terminus: Nuclear cap-binding protein subunit 2 (155 aa).

MRNA contacts are provided by residues Y19, Y42, 111 to 115 (RTDWD), 122 to 126 (RQYGR), and 132 to 133 (QV). The RRM domain maps to 39–117 (NTLYVGNLSF…RIIRTDWDAG (79 aa)). Residues 122 to 155 (RQYGRGKSGGQVRDEYRQDYDPARGGYGKVVARP) are disordered. A compositionally biased stretch (basic and acidic residues) spans 133-143 (VRDEYRQDYDP).

The protein belongs to the RRM NCBP2 family. Component of the nuclear cap-binding complex (CBC), a heterodimer composed of ncbp1/cbp80 and ncbp2/cbp20 that interacts with m7GpppG-capped RNA.

The protein resides in the nucleus. It localises to the cytoplasm. Component of the cap-binding complex (CBC), which binds co-transcriptionally to the 5' cap of pre-mRNAs and is involved in various processes such as pre-mRNA splicing, translation regulation, nonsense-mediated mRNA decay, RNA-mediated gene silencing (RNAi) by microRNAs (miRNAs) and mRNA export. The CBC complex is involved in mRNA export from the nucleus, leading to the recruitment of the mRNA export machinery to the 5' end of mRNA and to mRNA export in a 5' to 3' direction through the nuclear pore. The CBC complex is also involved in mediating U snRNA and intronless mRNAs export from the nucleus. The CBC complex is essential for a pioneer round of mRNA translation, before steady state translation when the CBC complex is replaced by cytoplasmic cap-binding protein eIF4E. The pioneer round of mRNA translation mediated by the CBC complex plays a central role in nonsense-mediated mRNA decay (NMD), NMD only taking place in mRNAs bound to the CBC complex, but not on eIF4E-bound mRNAs. The CBC complex enhances NMD in mRNAs containing at least one exon-junction complex (EJC), promoting the interaction between upf1 and upf2. The CBC complex is also involved in 'failsafe' NMD, which is independent of the EJC complex, while it does not participate in Staufen-mediated mRNA decay (SMD). During cell proliferation, the CBC complex is also involved in microRNAs (miRNAs) biogenesis via its interaction with srrt/ars2, thereby being required for miRNA-mediated RNA interference. The CBC complex also acts as a negative regulator of parn, thereby acting as an inhibitor of mRNA deadenylation. In the CBC complex, ncbp2/cbp20 recognizes and binds capped RNAs (m7GpppG-capped RNA) but requires ncbp1/cbp80 to stabilize the movement of its N-terminal loop and lock the CBC into a high affinity cap-binding state with the cap structure. The conventional cap-binding complex with NCBP2 binds both small nuclear RNA (snRNA) and messenger (mRNA) and is involved in their export from the nucleus. The sequence is that of Nuclear cap-binding protein subunit 2 (ncbp2) from Esox lucius (Northern pike).